Here is a 250-residue protein sequence, read N- to C-terminus: 3-deoxy-manno-octulosonate cytidylyltransferase (250 aa).

This sequence belongs to the KdsB family.

It localises to the cytoplasm. The enzyme catalyses 3-deoxy-alpha-D-manno-oct-2-ulosonate + CTP = CMP-3-deoxy-beta-D-manno-octulosonate + diphosphate. The protein operates within nucleotide-sugar biosynthesis; CMP-3-deoxy-D-manno-octulosonate biosynthesis; CMP-3-deoxy-D-manno-octulosonate from 3-deoxy-D-manno-octulosonate and CTP: step 1/1. Its pathway is bacterial outer membrane biogenesis; lipopolysaccharide biosynthesis. In terms of biological role, activates KDO (a required 8-carbon sugar) for incorporation into bacterial lipopolysaccharide in Gram-negative bacteria. In Francisella philomiragia subsp. philomiragia (strain ATCC 25017 / CCUG 19701 / FSC 153 / O#319-036), this protein is 3-deoxy-manno-octulosonate cytidylyltransferase.